A 137-amino-acid chain; its full sequence is Transcription antitermination protein NusB (137 aa).

It belongs to the NusB family.

Functionally, involved in transcription antitermination. Required for transcription of ribosomal RNA (rRNA) genes. Binds specifically to the boxA antiterminator sequence of the ribosomal RNA (rrn) operons. This chain is Transcription antitermination protein NusB, found in Borreliella afzelii (strain PKo) (Borrelia afzelii).